The following is a 274-amino-acid chain: Ribosomal RNA small subunit methyltransferase A (274 aa).

H15, L17, G42, E64, D89, and N108 together coordinate S-adenosyl-L-methionine.

It belongs to the class I-like SAM-binding methyltransferase superfamily. rRNA adenine N(6)-methyltransferase family. RsmA subfamily.

The protein localises to the cytoplasm. It catalyses the reaction adenosine(1518)/adenosine(1519) in 16S rRNA + 4 S-adenosyl-L-methionine = N(6)-dimethyladenosine(1518)/N(6)-dimethyladenosine(1519) in 16S rRNA + 4 S-adenosyl-L-homocysteine + 4 H(+). Functionally, specifically dimethylates two adjacent adenosines (A1518 and A1519) in the loop of a conserved hairpin near the 3'-end of 16S rRNA in the 30S particle. May play a critical role in biogenesis of 30S subunits. The protein is Ribosomal RNA small subunit methyltransferase A of Prochlorococcus marinus (strain MIT 9301).